Reading from the N-terminus, the 228-residue chain is Protein LIAT1 (228 aa).

Positions 1 to 108 (MAGRGGTGAA…RAEPRDKEEN (108 aa)) are disordered. A compositionally biased stretch (acidic residues) spans 12–24 (YGEEGEEEEEEEA). The segment at 49 to 71 (KRKVKKKKKKKKTKGSGKGDADK) is lysine-rich domain. Over residues 50–63 (RKVKKKKKKKKTKG) the composition is skewed to basic residues. The span at 90–108 (LNPHKDHGLRAEPRDKEEN) shows a compositional bias: basic and acidic residues. Residues 113 to 165 (PYSYSINHPCFAEIEDTLSSQINESLRWDGILTDPEAEKERIRIYKLNRRKRY) form an interaction with ATE1 region. Copy 1 of the repeat occupies 169–178 (ALKCFHSDPC).

Self-associates (via Lys-rich domain); targets LIAT1 to the nucleolus. Interacts with ATE1; it is not a substrate of ATE1, the interaction takes place in the cytoplasm and seems to increase ATE1 arginyltransferase activity. Interacts with JMJD6 and MRPS14. Post-translationally modified by JMJD6 lysyl-hydroxylase activity at its Lys-rich domain, which inhibits its self-association and nucleolar localization. As to expression, highly expressed in spleen, thymus, liver and brown adipose tissue. Moderately expressed in liver, testis and lung.

The protein localises to the nucleus. Its subcellular location is the nucleolus. It is found in the cytoplasm. Functionally, participates in nucleolar liquid-liquid phase separation (LLPS) through its N-terminal intrinsically disordered region (IDR). May be involved in ATE1-mediated N-terminal arginylation. This is Protein LIAT1 from Mus musculus (Mouse).